The sequence spans 964 residues: Myocardin-related transcription factor A (964 aa).

The segment at 1–291 (MTLLEPEMLM…KQDKGAPAMD (291 aa)) is mediates interaction with SCAI and ACTB. One copy of the RPEL 1 repeat lies at 15 to 40 (SVLQLKLQQRRTREELVSQGIMPPLK). At S41 the chain carries Phosphoserine. The interval 41–58 (SPAAFHEQRRSLERARTE) is intervening spacer sequence 1. An RPEL 2 repeat occupies 59 to 84 (DYLKRKIRSRPERAELVRMHILEETS). A Bipartite Nuclear localization signal motif is present at residues 62-100 (KRKIRSRPERAELVRMHILEETSAEPSLQAKQLKLKRAR). Positions 85–102 (AEPSLQAKQLKLKRARLA) are intervening spacer sequence 2. One copy of the RPEL 3 repeat lies at 103–128 (DDLNEKIAQRPGPMELVEKNILPVES). Disordered stretches follow at residues 145–292 (ADSS…AMDS) and 328–371 (LPAP…RQSS). Residues S159, S174, and S191 each carry the phosphoserine modification. Residues 186–197 (SATSISPTQVLS) are compositionally biased toward polar residues. Pro residues predominate over residues 215-224 (PPLPPAPLLP). Over residues 251–266 (ASEKSQRSKKAKELKP) the composition is skewed to basic and acidic residues. Low complexity predominate over residues 340–365 (GSSAPTPSRSLSTSSSPSSGTPGPSG). 2 positions are modified to phosphoserine: S349 and S351. The residue at position 352 (T352) is a Phosphothreonine. Residues S355 and S358 each carry the phosphoserine modification. T360 carries the phosphothreonine modification. S371 bears the Phosphoserine mark. The SAP domain occupies 385-419 (LDDMKVAELKQELKLRSLPVSGTKTELIERLRAYQ). A phosphoserine mark is found at S423 and S484. The disordered stretch occupies residues 484 to 508 (STGSTPPVSPTPSERSLLSTGDENS). T485 carries the post-translational modification Phosphothreonine. S487 carries the phosphoserine modification. T488 is modified (phosphothreonine). S492 carries the phosphoserine modification. T494 bears the Phosphothreonine mark. Residue S496 is modified to Phosphoserine. Residues 497 to 508 (ERSLLSTGDENS) are compositionally biased toward polar residues. 4 positions are modified to phosphoserine: S520, S530, S544, and S548. Residues 552–600 (RAELEGLDKDQMLQEKDKQIEELTRMLQQKQQLVELLRLQLEQQKRAQQ) adopt a coiled-coil conformation. Phosphoserine occurs at positions 605, 606, 651, 687, 718, 724, and 728. A disordered region spans residues 638–673 (TTNHGDTQAPAPESPPVVVKQEAGPPEPDLAPSSQL). Disordered regions lie at residues 706–779 (NKSA…SSSQ) and 796–849 (ADFK…RLED). The span at 715-727 (PAGSPQQPLSQPG) shows a compositional bias: low complexity. Residues 764–779 (TVTQQPKQQENGSSSQ) are compositionally biased toward polar residues. Over residues 796–810 (ADFKEPPSLPGKEKS) the composition is skewed to basic and acidic residues. S810 is subject to Phosphoserine. Position 822 is a phosphothreonine (T822). Phosphoserine occurs at positions 826 and 840. Phosphothreonine is present on T842. S892 bears the Phosphoserine mark.

Interacts with SRF, forming the SRF-MRTFA nuclear complex which binds the 5'-CArG-3' consensus motif (CArG box) on DNA via SRF. Interacts (via RPEL repeats) with globular actin (G-actin), thereby regulating its subcellular location and activity of the complex formed with SRF. Either forms a trivalent (by binding three G-actin monomers) or pentavalent (by binding five G-actin monomers) complex with G-actin. Forms a nuclear ternary complex with SCAI and SRF, leading to suppress MRTFA-induced SRF transcriptional activity. Interacts with beta-actin (ACTB); interaction with ACTB prevents interaction with SCAI. Interacts with MRTFB. Phosphorylation at Ser-41 by Erk inhibits binding of globular actin (G-actin), unmasking the nuclear localization signal (NLS) and promoting nuclear import. In terms of tissue distribution, expressed in heart, brain, spleen, lung, liver, muscle, kidney and testis.

Its subcellular location is the cytoplasm. It is found in the nucleus. Transcription coactivator that associates with the serum response factor (SRF) transcription factor to control expression of genes regulating the cytoskeleton during development, morphogenesis and cell migration. The SRF-MRTFA complex activity responds to Rho GTPase-induced changes in cellular globular actin (G-actin) concentration, thereby coupling cytoskeletal gene expression to cytoskeletal dynamics. MRTFA binds G-actin via its RPEL repeats, regulating activity of the MRTFA-SRF complex. Activity is also regulated by filamentous actin (F-actin) in the nucleus. In Mus musculus (Mouse), this protein is Myocardin-related transcription factor A (Mrtfa).